A 507-amino-acid polypeptide reads, in one-letter code: E3 ubiquitin-protein ligase TRIM31 (507 aa).

The RING-type zinc-finger motif lies at 16 to 56; that stretch reads CPICMEILQDPVTIDCGHNFCLQCISQVGKTSEKIQCPLCK. The B box-type zinc-finger motif lies at 89 to 130; that stretch reads KEDSRCQRHKEKLHYFCEQDGAFLCVVCRDSKDHKSHNVTLI. Zn(2+) contacts are provided by Cys94, His97, Cys116, and His122. 2 coiled-coil regions span residues 176–241 and 269–298; these read EKLK…LQSS and EDLE…DMNA. The region spanning 315-507 is the B30.2/SPRY domain; it reads EKESWSLLQK…VACSHITLSP (193 aa).

This sequence belongs to the TRIM/RBCC family. As to quaternary structure, may form oligomers. Interacts with isoform p52shc of SHC1. In terms of processing, auto-ubiquitinated (in vitro). In terms of tissue distribution, highly expressed in the gastrointestrinal tract, with high expression in the small intestine, moderate in the large intestine and weak in the stomach and esophagus.

The protein localises to the cytoplasm. The protein resides in the mitochondrion. It carries out the reaction S-ubiquitinyl-[E2 ubiquitin-conjugating enzyme]-L-cysteine + [acceptor protein]-L-lysine = [E2 ubiquitin-conjugating enzyme]-L-cysteine + N(6)-ubiquitinyl-[acceptor protein]-L-lysine.. The protein operates within protein modification; protein ubiquitination. Functionally, E3 ubiquitin-protein ligase that acts as a regulator of antiviral immune response and inflammation by mediating ubiquitination of substrates. Acts as a regulator of innate immune defense against viruses by mediating 'Lys-63'-linked ubiquitination of MAVS, promoting MAVS polymerization and formation of three-stranded helical filaments on mitochondria. Acts as a negative regulator of the NLRP3 inflammasome by catalyzing 'Lys-48'-linked ubiquitination of NLRP3, leading to its degradation. Regulator of Src-induced anchorage independent cell growth. This Mus musculus (Mouse) protein is E3 ubiquitin-protein ligase TRIM31.